Reading from the N-terminus, the 803-residue chain is H(+)/Cl(-) exchange transporter 7 (803 aa).

Positions 1-46 are disordered; sequence MANVSKKVSWSGRDRDDEEGAPLLRRTGQPDEETPLLNGAGPGARQ. The Cytoplasmic segment spans residues 1-124; it reads MANVSKKVSW…TAFRTVEIKR (124 aa). S9 bears the Phosphoserine mark. Transmembrane regions (helical) follow at residues 125-157 and 172-195; these read WVIC…YRVI and FSLL…VAFI. The Selectivity filter part_1 signature appears at 201-205; that stretch reads GSGIP. S202 serves as a coordination point for chloride. Positions 204–211 form an intramembrane region, helical; that stretch reads IPQIKCFL. 2 consecutive transmembrane segments (helical) span residues 221-239 and 245-262; these read RLKT…VVGG and EGPM…ISQG. The Selectivity filter part_2 motif lies at 243–247; the sequence is GKEGP. 2 intramembrane regions (helical) span residues 286-298 and 302-310; these read FVSA…VSAA and PVGGVLFSL. Helical transmembrane passes span 320 to 339, 373 to 403, 408 to 430, 485 to 505, and 510 to 533; these read FLTW…LNFV, IPVF…FRIR, PCLQ…FVLI, PMTL…TYGL, and GVFI…MSYL. A Selectivity filter part_3 motif is present at residues 510–514; the sequence is GVFIP. A chloride-binding site is contributed by F512. The segment at residues 543-557 is an intramembrane region (helical); sequence GKYALMGAAAQLGGI. Positions 558 to 560 form an intramembrane region, note=Loop between two helices; sequence VRM. Positions 561 to 572 form an intramembrane region, helical; the sequence is TLSLTVIMMEAT. The note=Loop between two helices intramembrane region spans 573 to 576; it reads SNVT. A helical transmembrane segment spans residues 577–595; it reads YGFPIMLVLMTAKIVGDVF. Residues 596-803 are Cytoplasmic-facing; it reads IEGLYDMHIQ…GLEELSLAQT (208 aa). Y600 provides a ligand contact to chloride. CBS domains are found at residues 629–693 and 739–797; these read MSTP…VFVE and MNPS…GLEE. Residues 656–658 and 781–784 each bind ATP; these read HNG and TRKD. S799 carries the phosphoserine modification.

Belongs to the chloride channel (TC 2.A.49) family. ClC-7/CLCN7 subfamily. In terms of assembly, chloride channel 7 are heteromers of alpha (CLCN7) and beta (OSTM1) subunits. Brain, testis, muscle and kidney.

Its subcellular location is the lysosome membrane. It catalyses the reaction 2 chloride(in) + H(+)(out) = 2 chloride(out) + H(+)(in). Slowly voltage-gated channel mediating the exchange of chloride ions against protons. Functions as antiporter and contributes to the acidification of the lysosome lumen and may be involved in maintaining lysosomal pH. The CLC channel family contains both chloride channels and proton-coupled anion transporters that exchange chloride or another anion for protons. The presence of conserved gating glutamate residues is typical for family members that function as antiporters. This chain is H(+)/Cl(-) exchange transporter 7 (Clcn7), found in Rattus norvegicus (Rat).